We begin with the raw amino-acid sequence, 415 residues long: Probable glucan 1,3-beta-glucosidase A (415 aa).

The N-terminal stretch at 1–22 (MLSRLSQTALVALSLMTVLTEA) is a signal peptide. Glu210 serves as the catalytic Proton donor. Cystine bridges form between Cys290/Cys414 and Cys315/Cys341. Glu307 functions as the Nucleophile in the catalytic mechanism. The segment at 335-359 (SPRYGDCGNKRQGSSSGLSEQERSD) is disordered.

This sequence belongs to the glycosyl hydrolase 5 (cellulase A) family. As to quaternary structure, monomer. Mn(2+) is required as a cofactor.

The protein resides in the secreted. The catalysed reaction is Successive hydrolysis of beta-D-glucose units from the non-reducing ends of (1-&gt;3)-beta-D-glucans, releasing alpha-glucose.. In terms of biological role, beta-glucanases participate in the metabolism of beta-glucan, the main structural component of the cell wall. It could also function biosynthetically as a transglycosylase. This Aspergillus clavatus (strain ATCC 1007 / CBS 513.65 / DSM 816 / NCTC 3887 / NRRL 1 / QM 1276 / 107) protein is Probable glucan 1,3-beta-glucosidase A (exgA).